A 71-amino-acid chain; its full sequence is Long neurotoxin 1 (71 aa).

Intrachain disulfides connect Cys-3/Cys-21, Cys-14/Cys-42, Cys-27/Cys-31, Cys-46/Cys-57, and Cys-58/Cys-63.

This sequence belongs to the three-finger toxin family. Long-chain subfamily. Type II alpha-neurotoxin sub-subfamily. In terms of tissue distribution, expressed by the venom gland.

Its subcellular location is the secreted. Functionally, binds with high affinity to muscular (alpha-1/CHRNA1) and neuronal (alpha-7/CHRNA7) nicotinic acetylcholine receptor (nAChR) and inhibits acetylcholine from binding to the receptor, thereby impairing neuromuscular and neuronal transmission. This chain is Long neurotoxin 1, found in Naja melanoleuca (Forest cobra).